The chain runs to 314 residues: DNA-directed RNA polymerase subunit alpha (314 aa).

The tract at residues 1-228 (MIEIEKPKIE…EHLNIFVGLT (228 aa)) is alpha N-terminal domain (alpha-NTD). Positions 246 to 314 (EKVLEMTIEE…ELGLGLRKDD (69 aa)) are alpha C-terminal domain (alpha-CTD).

This sequence belongs to the RNA polymerase alpha chain family. Homodimer. The RNAP catalytic core consists of 2 alpha, 1 beta, 1 beta' and 1 omega subunit. When a sigma factor is associated with the core the holoenzyme is formed, which can initiate transcription.

It carries out the reaction RNA(n) + a ribonucleoside 5'-triphosphate = RNA(n+1) + diphosphate. DNA-dependent RNA polymerase catalyzes the transcription of DNA into RNA using the four ribonucleoside triphosphates as substrates. This chain is DNA-directed RNA polymerase subunit alpha, found in Bacillus velezensis (strain DSM 23117 / BGSC 10A6 / LMG 26770 / FZB42) (Bacillus amyloliquefaciens subsp. plantarum).